We begin with the raw amino-acid sequence, 318 residues long: NADH-ubiquinone oxidoreductase chain 1 (318 aa).

8 consecutive transmembrane segments (helical) span residues 2–22 (FLINTLLLILPVLLAMAFLTL), 69–89 (LLFIIAPTLALTLALSMWLPI), 102–122 (ILFILATSSLAVYSILWSGWA), 146–166 (LAIILLCILLMNGSFTLSSLI), 171–191 (YMWILLPAWPLAMMWFISTLA), 222–242 (LFFLAEYTNIILMNALTAILF), 253–273 (EMFTVNFATKTLLLTMTFLWI), and 294–314 (LPLTLALCMWHISMPIMLSSI).

Belongs to the complex I subunit 1 family. In terms of assembly, core subunit of respiratory chain NADH dehydrogenase (Complex I) which is composed of 45 different subunits.

It localises to the mitochondrion inner membrane. It catalyses the reaction a ubiquinone + NADH + 5 H(+)(in) = a ubiquinol + NAD(+) + 4 H(+)(out). Functionally, core subunit of the mitochondrial membrane respiratory chain NADH dehydrogenase (Complex I) which catalyzes electron transfer from NADH through the respiratory chain, using ubiquinone as an electron acceptor. Essential for the catalytic activity and assembly of complex I. This chain is NADH-ubiquinone oxidoreductase chain 1 (MT-ND1), found in Oryctolagus cuniculus (Rabbit).